A 392-amino-acid chain; its full sequence is FK506-binding protein 4 (392 aa).

Disordered regions lie at residues 58–116 (NPEL…NEID) and 161–284 (GNYV…PKTK). 3 stretches are compositionally biased toward acidic residues: residues 73-86 (DGLE…EQEA), 104-116 (SESE…NEID), and 172-219 (SDSD…DASD). Phosphoserine is present on residues S80 and S82. Composition is skewed to basic and acidic residues over residues 220-234 (IESR…DEKK) and 252-279 (SAKP…ESKP). A PPIase FKBP-type domain is found at 306–392 (GTRVGMRYVG…TFDVKLVSMK (87 aa)).

Belongs to the FKBP-type PPIase family. FKBP3/4 subfamily. In terms of assembly, binds to histones H3 and H4. Interacts with NOP53.

It is found in the nucleus. It catalyses the reaction [protein]-peptidylproline (omega=180) = [protein]-peptidylproline (omega=0). Its function is as follows. PPIase that acts as a histone chaperone. Histone proline isomerase that increases the rate of cis-trans isomerization at 'Pro-17' (H3P16), 'Pro-31' (H3P30) and 'Pro-39 (H3P38) on the histone H3 N-terminal tail. H3P16 and H3P30 are the major proline targets with little activity shown against H3P38. H3P38 isomerization influences SET2-mediated H3K36 methylation thereby regulating gene expression. In Saccharomyces cerevisiae (strain ATCC 204508 / S288c) (Baker's yeast), this protein is FK506-binding protein 4.